We begin with the raw amino-acid sequence, 804 residues long: Exocyst complex component 6 (804 aa).

Belongs to the SEC15 family. The exocyst complex is composed of EXOC1, EXOC2, EXOC3, EXOC4, EXOC5, EXOC6, EXOC7 and EXOC8. Interacts with CNTRL. Interacts with RAB11A in a GTP-dependent manner.

It is found in the cytoplasm. The protein localises to the perinuclear region. The protein resides in the cell projection. It localises to the growth cone. Its subcellular location is the midbody. It is found in the midbody ring. Its function is as follows. Component of the exocyst complex involved in the docking of exocytic vesicles with fusion sites on the plasma membrane. Together with RAB11A, RAB3IP, RAB8A, PARD3, PRKCI, ANXA2, CDC42 and DNMBP promotes transcytosis of PODXL to the apical membrane initiation sites (AMIS), apical surface formation and lumenogenesis. In Homo sapiens (Human), this protein is Exocyst complex component 6 (EXOC6).